The chain runs to 155 residues: Small ribosomal subunit protein mS86 (155 aa).

The transit peptide at 1–27 directs the protein to the mitochondrion; sequence MHYMGLFSRAGNIFRQPRALQASNAML. The RRM domain occupies 36–114; sequence SKIFVGGLSP…RIIGVHPADS (79 aa).

This sequence belongs to the GR-RBP family. In terms of assembly, component of the mitochondrial ribosome small subunit.

It is found in the mitochondrion. Its function is as follows. Possibly has a role in RNA transcription or processing during stress. This is Small ribosomal subunit protein mS86 (RBG6) from Arabidopsis thaliana (Mouse-ear cress).